A 196-amino-acid chain; its full sequence is MNSAALIETITQLISPLITAQGLKLWGIELINIPQPIIKIFVDTIETNRLHENNIINSKSEQITIEQCASLSRLIGLTLEVEELFPNKWTLEVSSPGLERSFFTIQQLSNYINHDIDVTLKEQHPLWPNRKKFYGTLISITDNTFMLNLSLAHRKSDEPENVSINWQQVRKATLVHHFFQPNKKLGSTKGLNGGTT.

Belongs to the RimP family.

The protein resides in the cytoplasm. Required for maturation of 30S ribosomal subunits. This Lawsonia intracellularis (strain PHE/MN1-00) protein is Ribosome maturation factor RimP.